Here is a 280-residue protein sequence, read N- to C-terminus: DegV domain-containing protein M6_Spy1440 (280 aa).

In terms of domain architecture, DegV spans 3–280 (WKIVTDSGCD…DGGLLMGYEI (278 aa)). Ser63 and Ser91 together coordinate hexadecanoate.

Functionally, may bind long-chain fatty acids, such as palmitate, and may play a role in lipid transport or fatty acid metabolism. The sequence is that of DegV domain-containing protein M6_Spy1440 from Streptococcus pyogenes serotype M6 (strain ATCC BAA-946 / MGAS10394).